A 192-amino-acid chain; its full sequence is Protein GrpE (192 aa).

A disordered region spans residues 1-34 (MSSKEQKTPNEQVSEEMENTAEQQVEATQETGEC). A compositionally biased stretch (polar residues) spans 20–31 (TAEQQVEATQET).

The protein belongs to the GrpE family. Homodimer.

The protein resides in the cytoplasm. Participates actively in the response to hyperosmotic and heat shock by preventing the aggregation of stress-denatured proteins, in association with DnaK and GrpE. It is the nucleotide exchange factor for DnaK and may function as a thermosensor. Unfolded proteins bind initially to DnaJ; upon interaction with the DnaJ-bound protein, DnaK hydrolyzes its bound ATP, resulting in the formation of a stable complex. GrpE releases ADP from DnaK; ATP binding to DnaK triggers the release of the substrate protein, thus completing the reaction cycle. Several rounds of ATP-dependent interactions between DnaJ, DnaK and GrpE are required for fully efficient folding. This is Protein GrpE from Yersinia pseudotuberculosis serotype I (strain IP32953).